The chain runs to 63 residues: uncharacterized protein (63 aa).

This is an uncharacterized protein from Thermoproteus tenax (TTV1).